The following is an 83-amino-acid chain: Hepcidin (83 aa).

The signal sequence occupies residues 1–23; that stretch reads MALSTRTQAACLLLLLLASLSST. The propeptide occupies 24–53; that stretch reads TYLHQQMRQTTELQPLHGEESRADIAIPMQ. Intrachain disulfides connect cysteine 65-cysteine 81, cysteine 68-cysteine 71, cysteine 69-cysteine 77, and cysteine 72-cysteine 80.

Belongs to the hepcidin family. Interacts with SLC40A1; this interaction promotes SLC40A1 rapid ubiquitination. Highly expressed in the liver and to a much lesser extent in the heart. Secreted in blood.

The protein resides in the secreted. Liver-produced hormone that constitutes the main circulating regulator of iron absorption and distribution across tissues. Acts by promoting endocytosis and degradation of SLC40A1, leading to the retention of iron in iron-exporting cells and decreased flow of iron into plasma. Controls the major flows of iron into plasma: absorption of dietary iron in the intestine, recycling of iron by macrophages, which phagocytose old erythrocytes and other cells, and mobilization of stored iron from hepatocytes. This chain is Hepcidin (Hamp), found in Mus musculus (Mouse).